The chain runs to 1453 residues: Chromatin remodeling regulator CECR2 (1453 aa).

The interval 170 to 237 (VQGRSNGELS…DLQTRNGSRG (68 aa)) is disordered. The segment covering 197-209 (TGKRRGRPPKRKK) has biased composition (basic residues). Positions 210–222 (LQEEIISSEKQEE) are enriched in basic and acidic residues. Residues 223–234 (NSLTSDLQTRNG) show a composition bias toward polar residues. Residue S402 is modified to Phosphoserine. The Bromo domain occupies 414 to 518 (FELDDDFTAM…RCFHRAMTKH (105 aa)). T526 bears the Phosphothreonine mark. Disordered stretches follow at residues 536 to 667 (EKRE…HPPF), 767 to 796 (HGTT…TLGH), 827 to 868 (GYMQ…GESM), 884 to 1020 (VCPP…DNSY), 1046 to 1072 (VVGE…LCPR), 1131 to 1308 (LASM…YLYG), 1331 to 1368 (MLQT…VATQ), and 1396 to 1453 (QTGT…LDQS). At S551 the chain carries Phosphoserine. The span at 637-649 (GSLQGSDPTNLHG) shows a compositional bias: polar residues. Positions 655-664 (EAPPGEPLQH) are enriched in pro residues. Pro residues predominate over residues 887–905 (PGVPYHPRQPTPPQLPGPF). Phosphoserine is present on S983. Residues 985 to 998 (QERETEDSQLKSDA) show a composition bias toward basic and acidic residues. The span at 999–1020 (SDSADTYKTSKNKNTWPLDNSY) shows a compositional bias: polar residues. Asymmetric dimethylarginine is present on residues R1166 and R1172. Low complexity-rich tracts occupy residues 1173 to 1187 (YSYQ…HPYQ) and 1202 to 1211 (QRSLPSQRSP). Over residues 1228 to 1250 (NVLSSLQGCETLNTALTSPTQMD) the composition is skewed to polar residues. Over residues 1265–1289 (GPEEEKMDESVERPESPKEFLDLDN) the composition is skewed to basic and acidic residues. Phosphoserine is present on S1280. Composition is skewed to polar residues over residues 1291-1304 (NAAT…STSD) and 1331-1346 (MLQT…SASH). Residues 1352–1364 (YPSPVPAHPPPHP) are compositionally biased toward pro residues.

As to quaternary structure, component of the CERF-1 ISWI chromatin remodeling complex (also called the CECR2-containing remodeling factor (CERF) complex) at least composed of CECR2 and SMARCA1. Component of the CERF-5 ISWI chromatin remodeling complex at least composed of CECR2 and SMARCA5/SNF2H. LUZP1 is detected as part of the CERF-1 and CERF-5 complexes in embryonic stem (ES) cells where it is involved in complex stabilization but is not detected in the complexes in the testis. Interacts with CCAR2; CCAR2 may form part of the CERF-1 and/or CEF-5 ISWI chromatin remodeling complexes in ES cells. Interacts with acetylated lysine residues on histone H2A and H3 (in vitro). Interacts with LRPPRC.

It is found in the nucleus. Functionally, regulatory subunit of the ATP-dependent CERF-1 and CERF-5 ISWI chromatin remodeling complexes, which form ordered nucleosome arrays on chromatin and facilitate access to DNA during DNA-templated processes such as DNA replication, transcription, and repair. The complexes do not have the ability to slide mononucleosomes to the center of a DNA template. The CERF-1 ISWI chromatin remodeling complex has a lower ATP hydrolysis rate than the CERF-5 ISWI chromatin remodeling complex. Plays a role in various processes during development: required during embryogenesis for neural tube closure and inner ear development. In adults, required for spermatogenesis, via the formation of ISWI-type chromatin complexes. In histone-modifying complexes, CECR2 recognizes and binds acylated histones: binds histones that are acetylated and/or butyrylated. May also be involved through its interaction with LRPPRC in the integration of cytoskeletal network with vesicular trafficking, nucleocytosolic shuttling, transcription, chromosome remodeling and cytokinesis. This Mus musculus (Mouse) protein is Chromatin remodeling regulator CECR2.